Here is a 556-residue protein sequence, read N- to C-terminus: Protein F37C4.5 (556 aa).

Ala-2 is subject to N-acetylalanine.

The sequence is that of Protein F37C4.5 from Caenorhabditis elegans.